The chain runs to 388 residues: Flavin-dependent monooxygenase (388 aa).

FAD contacts are provided by residues 12–15, 34–36, 44–47, arginine 105, tyrosine 267, aspartate 289, and 296–302; these read VGVA, EKS, QALD, and PLSGQGN.

Belongs to the aromatic-ring hydroxylase family. Requires FAD as cofactor.

The catalysed reaction is a tetracycline + NADPH + O2 + H(+) = a (1S,10aS)-3-(CONH2)-1-(Me2N)-3,3a,4,6-(HO)4-2,5-dioxo-1H,10aH,11H,11aH-cyclopenta[b]anthracene + CO + NADP(+) + H2O. It carries out the reaction 7-chlorotetracycline + NADPH + O2 + H(+) = (1S,10S,10aS)-3-(CONH2)-9-Cl-1-(Me2N)-3,3a,4,10-(HO)4-10-Me-2,5-dioxo-1H,10aH,11H,11aH-cyclopenta[b]anthracen-6-olate + CO + NADP(+) + H2O. With respect to regulation, inhibited by anhydrotetracycline. Functionally, an FAD-requiring monooxygenase active on tetracycline antibiotic and some of its derivatives, which leads to their inactivation. Expression in E.coli confers high resistance to tetracycline and oxytetracycline, does not confer resistance to minocycline or tigecycline. Degrades tetracycline and oxytetracycline; the reaction requires NADPH. Degrades and confers resistance to chlortetracycline. The protein is Flavin-dependent monooxygenase (tet(50)) of Unknown prokaryotic organism.